Here is a 168-residue protein sequence, read N- to C-terminus: Disulfide bond formation protein B 2 (168 aa).

The Cytoplasmic portion of the chain corresponds to 1–9 (MSLACLRSF). A helical transmembrane segment spans residues 10 to 26 (FLPALLASTAVLVASFH). Over 27 to 44 (LESVVGLVPCALCFSQRL) the chain is Periplasmic. C36 and C39 are oxidised to a cystine. A helical transmembrane segment spans residues 45–61 (MLGVYALVCLAALVHSP). The Cytoplasmic segment spans residues 62–67 (AARGRR). The chain crosses the membrane as a helical span at residues 68 to 85 (AYAGLALASAFGGALLAG). Over 86 to 140 (RHVWLQGDPQVVDGCHLPVEQVLQRPLGEILQMFLLGSPDCVSISWSFLDLTLPE) the chain is Periplasmic. Cysteines 100 and 126 form a disulfide. Residues 141-159 (WSLLAFLLLAAMPLSWLVA) form a helical membrane-spanning segment. The Cytoplasmic segment spans residues 160-168 (YRFRKRAMA).

It belongs to the DsbB family.

It is found in the cell inner membrane. Required for disulfide bond formation in some periplasmic proteins. Acts by oxidizing the DsbA protein. The sequence is that of Disulfide bond formation protein B 2 from Pseudomonas entomophila (strain L48).